A 103-amino-acid polypeptide reads, in one-letter code: Urease subunit beta (103 aa).

It belongs to the urease beta subunit family. In terms of assembly, heterotrimer of UreA (gamma), UreB (beta) and UreC (alpha) subunits. Three heterotrimers associate to form the active enzyme.

The protein localises to the cytoplasm. It carries out the reaction urea + 2 H2O + H(+) = hydrogencarbonate + 2 NH4(+). It functions in the pathway nitrogen metabolism; urea degradation; CO(2) and NH(3) from urea (urease route): step 1/1. The chain is Urease subunit beta from Blochmanniella floridana.